A 448-amino-acid chain; its full sequence is Biotin carboxylase (448 aa).

The Biotin carboxylation domain maps to 1-445; sequence MLEKVVIANR…NIHYLEKKLG (445 aa). ATP contacts are provided by residues lysine 116, lysine 159, 165–166, 201–204, histidine 209, and histidine 236; these read GG and EKYL. An ATP-grasp domain is found at 120-317; that stretch reads IKAMKKAGVP…LVKEQLRIAA (198 aa). Lysine 238 serves as a coordination point for hydrogencarbonate. Glutamate 276 and glutamate 288 together coordinate ATP. Positions 276, 288, and 290 each coordinate Mg(2+). The Mn(2+) site is built by glutamate 276, glutamate 288, and asparagine 290. The hydrogencarbonate site is built by arginine 292, valine 295, and arginine 338. Residue arginine 292 is part of the active site. Arginine 338 contributes to the biotin binding site.

As to quaternary structure, acetyl-CoA carboxylase is a heterohexamer of biotin carboxyl carrier protein, biotin carboxylase and the two subunits of carboxyl transferase in a 2:2 complex. Mg(2+) is required as a cofactor. It depends on Mn(2+) as a cofactor.

The catalysed reaction is N(6)-biotinyl-L-lysyl-[protein] + hydrogencarbonate + ATP = N(6)-carboxybiotinyl-L-lysyl-[protein] + ADP + phosphate + H(+). It participates in lipid metabolism; malonyl-CoA biosynthesis; malonyl-CoA from acetyl-CoA: step 1/1. Functionally, this protein is a component of the acetyl coenzyme A carboxylase complex; first, biotin carboxylase catalyzes the carboxylation of the carrier protein and then the transcarboxylase transfers the carboxyl group to form malonyl-CoA. The polypeptide is Biotin carboxylase (accC) (Haemophilus influenzae (strain ATCC 51907 / DSM 11121 / KW20 / Rd)).